A 560-amino-acid chain; its full sequence is Serine palmitoyltransferase 2 (560 aa).

Residues 65–85 traverse the membrane as a helical segment; that stretch reads PMLVAVLTYVGYGVLTLFGYL. The residue at position 377 (K377) is an N6-(pyridoxal phosphate)lysine.

It belongs to the class-II pyridoxal-phosphate-dependent aminotransferase family. As to quaternary structure, component of the serine palmitoyltransferase (SPT) complex, which is composed of SPTLC1, SPTLC2 or SPTLC3 and SPTSSA or SPTSSB. The heterodimer consisting of SPTLC1 and SPTLC2/SPTLC3 forms the catalytic core of the enzyme, while SPTSSA or SPTSSB subunits determine substrate specificity. SPT also interacts with ORMDL proteins, especially ORMDL3, which negatively regulate SPT activity in the presence of ceramides. Forms dimers of heterodimers with SPTLC1. Pyridoxal 5'-phosphate is required as a cofactor.

It is found in the endoplasmic reticulum membrane. The enzyme catalyses L-serine + hexadecanoyl-CoA + H(+) = 3-oxosphinganine + CO2 + CoA. It catalyses the reaction octadecanoyl-CoA + L-serine + H(+) = 3-oxoeicosasphinganine + CO2 + CoA. It participates in lipid metabolism; sphingolipid metabolism. Its activity is regulated as follows. SPT complex catalytic activity is negatively regulated by ORMDL proteins, including ORMDL3, in the presence of ceramides. This mechanism allows to maintain ceramide levels at sufficient concentrations for the production of complex sphingolipids, but which prevents the accumulation of ceramides to levels that trigger apoptosis. Functionally, component of the serine palmitoyltransferase multisubunit enzyme (SPT) that catalyzes the initial and rate-limiting step in sphingolipid biosynthesis by condensing L-serine and activated acyl-CoA (most commonly palmitoyl-CoA) to form long-chain bases. The SPT complex is composed of SPTLC1, SPTLC2 or SPTLC3 and SPTSSA or SPTSSB. Within this complex, the heterodimer consisting of SPTLC1 and SPTLC2/SPTLC3 forms the catalytic core. The composition of the serine palmitoyltransferase (SPT) complex determines the substrate preference. The SPTLC1-SPTLC2-SPTSSA complex shows a strong preference for C16-CoA substrate, while the SPTLC1-SPTLC3-SPTSSA isozyme uses both C14-CoA and C16-CoA as substrates, with a slight preference for C14-CoA. The SPTLC1-SPTLC2-SPTSSB complex shows a strong preference for C18-CoA substrate, while the SPTLC1-SPTLC3-SPTSSB isozyme displays an ability to use a broader range of acyl-CoAs, without apparent preference. Crucial for adipogenesis. The chain is Serine palmitoyltransferase 2 (SPTLC2) from Cricetulus griseus (Chinese hamster).